The sequence spans 267 residues: Small ribosomal subunit protein uS2 (267 aa).

A disordered region spans residues 237 to 267; that stretch reads IGESAAAPSEPALETASAEATAEGEQPGSQA. Residues 238-261 show a composition bias toward low complexity; the sequence is GESAAAPSEPALETASAEATAEGE.

It belongs to the universal ribosomal protein uS2 family.

In Chelativorans sp. (strain BNC1), this protein is Small ribosomal subunit protein uS2.